Reading from the N-terminus, the 124-residue chain is Fluoride-specific ion channel FluC (124 aa).

The next 4 membrane-spanning stretches (helical) occupy residues 4-24 (YLVIAVGGSIGAILRYLTGVY), 36-56 (GTLIVNVVGSFILSFFMILFL), 63-83 (PLWRLFVAVGFCGSYTTLSSI), and 100-120 (LLNIALNFGLSFLSAFAGIVL). 2 residues coordinate Na(+): G75 and T78.

The protein belongs to the fluoride channel Fluc/FEX (TC 1.A.43) family.

Its subcellular location is the cell inner membrane. The catalysed reaction is fluoride(in) = fluoride(out). With respect to regulation, na(+) is not transported, but it plays an essential structural role and its presence is essential for fluoride channel function. Functionally, fluoride-specific ion channel. Important for reducing fluoride concentration in the cell, thus reducing its toxicity. The protein is Fluoride-specific ion channel FluC of Sulfurihydrogenibium sp. (strain YO3AOP1).